A 60-amino-acid chain; its full sequence is MTQVVIGQNEAIESALRRFKRQVAKAGIYADIKKNQFFETPEEKRKRKAIARRRQRSRRR.

A disordered region spans residues 41–60 (PEEKRKRKAIARRRQRSRRR). Residues 45-60 (RKRKAIARRRQRSRRR) are compositionally biased toward basic residues.

This sequence belongs to the bacterial ribosomal protein bS21 family.

The protein is Small ribosomal subunit protein bS21 of Gloeothece citriformis (strain PCC 7424) (Cyanothece sp. (strain PCC 7424)).